The following is a 422-amino-acid chain: Ameloblastin (422 aa).

A signal peptide spans 1–26 (MSASKIPLFKMKGLLLFLSLVKMSLA). Position 42 is a hydroxyproline (Pro-42). Phosphoserine is present on Ser-48. Ser-117 carries O-linked (GalNAc...) serine glycosylation. Positions 271–321 (GLNQNSPKGGDFTVEVDSPVSVTKGPEKGEGPEGSPLQEASPDKGENPALL) are disordered.

This sequence belongs to the ameloblastin family. Ameloblast-specific.

The protein localises to the secreted. The protein resides in the extracellular space. It localises to the extracellular matrix. Functionally, involved in the mineralization and structural organization of enamel. The chain is Ameloblastin (Ambn) from Rattus norvegicus (Rat).